The chain runs to 424 residues: Serine--tRNA ligase (424 aa).

Position 231 to 233 (231 to 233 (TAE)) interacts with L-serine. ATP contacts are provided by residues 262 to 264 (RRE) and valine 278. Glutamate 285 contributes to the L-serine binding site. Position 349–352 (349–352 (EVSS)) interacts with ATP. Serine 384 lines the L-serine pocket.

The protein belongs to the class-II aminoacyl-tRNA synthetase family. Type-1 seryl-tRNA synthetase subfamily. Homodimer. The tRNA molecule binds across the dimer.

It is found in the cytoplasm. The catalysed reaction is tRNA(Ser) + L-serine + ATP = L-seryl-tRNA(Ser) + AMP + diphosphate + H(+). It catalyses the reaction tRNA(Sec) + L-serine + ATP = L-seryl-tRNA(Sec) + AMP + diphosphate + H(+). It participates in aminoacyl-tRNA biosynthesis; selenocysteinyl-tRNA(Sec) biosynthesis; L-seryl-tRNA(Sec) from L-serine and tRNA(Sec): step 1/1. Its function is as follows. Catalyzes the attachment of serine to tRNA(Ser). Is also able to aminoacylate tRNA(Sec) with serine, to form the misacylated tRNA L-seryl-tRNA(Sec), which will be further converted into selenocysteinyl-tRNA(Sec). In Chlamydia abortus (strain DSM 27085 / S26/3) (Chlamydophila abortus), this protein is Serine--tRNA ligase.